Here is a 126-residue protein sequence, read N- to C-terminus: MLPEPSRLRRHADFSVAVRRGRRMGRRDLVVHAFDREQVEALVVTNHGPRFGLIVSKAVGPAVIRHRVARRLRHICADFVGQVSPETDVVIRALPGAATASSAELAKQLRGGLTKMNLLVSVSEEP.

The protein belongs to the RnpA family. Consists of a catalytic RNA component (M1 or rnpB) and a protein subunit.

It catalyses the reaction Endonucleolytic cleavage of RNA, removing 5'-extranucleotides from tRNA precursor.. Its function is as follows. RNaseP catalyzes the removal of the 5'-leader sequence from pre-tRNA to produce the mature 5'-terminus. It can also cleave other RNA substrates such as 4.5S RNA. The protein component plays an auxiliary but essential role in vivo by binding to the 5'-leader sequence and broadening the substrate specificity of the ribozyme. The protein is Ribonuclease P protein component of Rhodococcus erythropolis (strain PR4 / NBRC 100887).